The chain runs to 229 residues: ATP synthase subunit a (229 aa).

Helical transmembrane passes span 25–45, 82–102, 111–131, 142–162, 181–201, and 202–222; these read ADAI…SILA, FFPL…IGLI, NINT…IVGI, FLGP…IGHF, LVLM…MMLM, and GVLV…IYIQ.

The protein belongs to the ATPase A chain family. As to quaternary structure, F-type ATPases have 2 components, CF(1) - the catalytic core - and CF(0) - the membrane proton channel. CF(1) has five subunits: alpha(3), beta(3), gamma(1), delta(1), epsilon(1). CF(0) has three main subunits: a(1), b(2) and c(9-12). The alpha and beta chains form an alternating ring which encloses part of the gamma chain. CF(1) is attached to CF(0) by a central stalk formed by the gamma and epsilon chains, while a peripheral stalk is formed by the delta and b chains.

The protein localises to the cell inner membrane. Its function is as follows. Key component of the proton channel; it plays a direct role in the translocation of protons across the membrane. In Geotalea daltonii (strain DSM 22248 / JCM 15807 / FRC-32) (Geobacter daltonii), this protein is ATP synthase subunit a.